We begin with the raw amino-acid sequence, 145 residues long: Cell wall teichoic acid glycosylation protein GtcA (145 aa).

The next 4 membrane-spanning stretches (helical) occupy residues 21-41, 52-69, 96-116, and 121-141; these read ILMY…TFWL, IANT…YFSN, FLTY…LSIN, and KIWT…WIIF.

Belongs to the GtrA family.

The protein resides in the cell membrane. Functionally, involved in the decoration of cell wall teichoic acid with galactose and glucose. This chain is Cell wall teichoic acid glycosylation protein GtcA (gtcA), found in Listeria monocytogenes serovar 1/2a (strain ATCC BAA-679 / EGD-e).